Reading from the N-terminus, the 97-residue chain is Early nodulin-75 (97 aa).

The interval Arg1–Pro97 is disordered. Composition is skewed to pro residues over residues Glu9–Gln22 and Val31–Lys43. A compositionally biased stretch (basic and acidic residues) spans Pro76–Pro97.

This sequence belongs to the nodulin 75 family.

Its function is as follows. Involved in early stages of root nodule development. The sequence is that of Early nodulin-75 (ENOD2) from Medicago sativa (Alfalfa).